The following is a 262-amino-acid chain: Acyl-[acyl-carrier-protein]--UDP-N-acetylglucosamine O-acyltransferase (262 aa).

The protein belongs to the transferase hexapeptide repeat family. LpxA subfamily. In terms of assembly, homotrimer.

The protein resides in the cytoplasm. The catalysed reaction is a (3R)-hydroxyacyl-[ACP] + UDP-N-acetyl-alpha-D-glucosamine = a UDP-3-O-[(3R)-3-hydroxyacyl]-N-acetyl-alpha-D-glucosamine + holo-[ACP]. The protein operates within glycolipid biosynthesis; lipid IV(A) biosynthesis; lipid IV(A) from (3R)-3-hydroxytetradecanoyl-[acyl-carrier-protein] and UDP-N-acetyl-alpha-D-glucosamine: step 1/6. Functionally, involved in the biosynthesis of lipid A, a phosphorylated glycolipid that anchors the lipopolysaccharide to the outer membrane of the cell. The sequence is that of Acyl-[acyl-carrier-protein]--UDP-N-acetylglucosamine O-acyltransferase from Yersinia pseudotuberculosis serotype O:1b (strain IP 31758).